The following is a 297-amino-acid chain: GTP cyclohydrolase FolE2 (297 aa).

Disordered regions lie at residues 1–21 (MTHA…SERD) and 180–207 (IRAE…RERP).

This sequence belongs to the GTP cyclohydrolase IV family.

The catalysed reaction is GTP + H2O = 7,8-dihydroneopterin 3'-triphosphate + formate + H(+). The protein operates within cofactor biosynthesis; 7,8-dihydroneopterin triphosphate biosynthesis; 7,8-dihydroneopterin triphosphate from GTP: step 1/1. Functionally, converts GTP to 7,8-dihydroneopterin triphosphate. This Methylibium petroleiphilum (strain ATCC BAA-1232 / LMG 22953 / PM1) protein is GTP cyclohydrolase FolE2.